A 501-amino-acid chain; its full sequence is uncharacterized protein (501 aa).

2 disordered regions span residues 179–404 (EKTS…DETA) and 480–501 (SDDTDDTDDTNNSCSSEVDDSD). Residues 191–200 (SRNESQDKSR) are compositionally biased toward basic and acidic residues. Over residues 201–214 (DKSRKKVCNTHKNK) the composition is skewed to basic residues. Positions 215 to 226 (KTLDNVKPDKNI) are enriched in basic and acidic residues. Positions 231–274 (SSNKFTTNKPKSNKNSSDSDGSTKTTKSTRSTKSTKSSKSQKST) are enriched in low complexity. Residues 304 to 316 (NPKESINHKKNDS) show a composition bias toward basic and acidic residues. The span at 333-352 (DSTNCRKSNRTTTRDVTNSD) shows a compositional bias: polar residues. The span at 379–403 (EQSDLTEDETEENVSEEDETEEDET) shows a compositional bias: acidic residues.

This is an uncharacterized protein from Acanthamoeba polyphaga mimivirus (APMV).